A 381-amino-acid polypeptide reads, in one-letter code: Dual specificity protein phosphatase 6 (381 aa).

The region spanning 30–148 (GNERLLLMDC…FQAEFSLHCE (119 aa)) is the Rhodanese domain. Residues 176-203 (SSSDIESDLDRDPNSATDSDGSPLSNSQ) are disordered. The segment covering 189-203 (NSATDSDGSPLSNSQ) has biased composition (polar residues). The Tyrosine-protein phosphatase domain maps to 206–349 (FPVEILPFLY…LLDFERTLGL (144 aa)). Cys293 acts as the Phosphocysteine intermediate in catalysis.

The protein belongs to the protein-tyrosine phosphatase family. Non-receptor class dual specificity subfamily. In terms of assembly, interacts with MAPK1/ERK2. Ubiquitinated by the SCF(FBXO31) complex, leading to its proteasomal degradation. In terms of tissue distribution, expressed in keratinocytes (at protein level).

Its subcellular location is the cytoplasm. It carries out the reaction O-phospho-L-tyrosyl-[protein] + H2O = L-tyrosyl-[protein] + phosphate. The enzyme catalyses O-phospho-L-seryl-[protein] + H2O = L-seryl-[protein] + phosphate. The catalysed reaction is O-phospho-L-threonyl-[protein] + H2O = L-threonyl-[protein] + phosphate. Functionally, dual specificity protein phosphatase, which mediates dephosphorylation and inactivation of MAP kinases. Has a specificity for the ERK family. Plays an important role in alleviating chronic postoperative pain. Necessary for the normal dephosphorylation of the long-lasting phosphorylated forms of spinal MAPK1/3 and MAP kinase p38 induced by peripheral surgery, which drives the resolution of acute postoperative allodynia. Also important for dephosphorylation of MAPK1/3 in local wound tissue, which further contributes to resolution of acute pain. Promotes cell differentiation by regulating MAPK1/MAPK3 activity and regulating the expression of AP1 transcription factors. The protein is Dual specificity protein phosphatase 6 (DUSP6) of Homo sapiens (Human).